The following is a 506-amino-acid chain: Acetylcholine receptor subunit gamma (506 aa).

Positions 1–17 (MVLTLLLIICLALEVRS) are cleaved as a signal peptide. The Extracellular portion of the chain corresponds to 18–235 (ENEEGRLIEK…IIFFLIIQRK (218 aa)). N-linked (GlcNAc...) asparagine glycosylation occurs at Asn85. A disulfide bridge links Cys145 with Cys159. The next 3 membrane-spanning stretches (helical) occupy residues 236 to 260 (PLFYIINIIAPCVLISSLVVLVYFL), 269 to 287 (CTLSISVLLAQTIFLFLIA), and 303 to 324 (YLIFVMFVSMLIVMNCVIVLNV). Residues 325–466 (SLRTPNTHSL…WVLIGKVIDK (142 aa)) are Cytoplasmic-facing. Tyr381 is modified (phosphotyrosine; by Tyr-kinases). Residues 467-490 (ACFWIALLLFSIGTLAIFLTGHFN) form a helical membrane-spanning segment.

It belongs to the ligand-gated ion channel (TC 1.A.9) family. Acetylcholine receptor (TC 1.A.9.1) subfamily. Gamma/CHRNG sub-subfamily. As to quaternary structure, pentamer of two alpha chains, and one each of the beta, delta, and gamma chains. Seems not to be glycosylated on Asn-158.

The protein resides in the postsynaptic cell membrane. It is found in the cell membrane. The enzyme catalyses K(+)(in) = K(+)(out). The catalysed reaction is Na(+)(in) = Na(+)(out). Its function is as follows. After binding acetylcholine, the AChR responds by an extensive change in conformation that affects all subunits and leads to opening of an ion-conducting channel across the plasma membrane. This chain is Acetylcholine receptor subunit gamma (CHRNG), found in Tetronarce californica (Pacific electric ray).